A 453-amino-acid polypeptide reads, in one-letter code: Chromosomal replication initiator protein DnaA (453 aa).

The tract at residues 1–71 (MSEKEIWEKV…QAILFDVVGY (71 aa)) is domain I, interacts with DnaA modulators. The tract at residues 71-114 (YEVKPHFITTEELANYSNNETATPKEATKPSTETTEDNHVLGRE) is domain II. Residues 115 to 331 (QFNAHNTFDT…GALTRLLAYS (217 aa)) are domain III, AAA+ region. Positions 159, 161, 162, and 163 each coordinate ATP. Residues 332–453 (QLLGKPITTE…ENLEKEIRNV (122 aa)) are domain IV, binds dsDNA.

This sequence belongs to the DnaA family. As to quaternary structure, oligomerizes as a right-handed, spiral filament on DNA at oriC.

Its subcellular location is the cytoplasm. Functionally, plays an essential role in the initiation and regulation of chromosomal replication. ATP-DnaA binds to the origin of replication (oriC) to initiate formation of the DNA replication initiation complex once per cell cycle. Binds the DnaA box (a 9 base pair repeat at the origin) and separates the double-stranded (ds)DNA. Forms a right-handed helical filament on oriC DNA; dsDNA binds to the exterior of the filament while single-stranded (ss)DNA is stabiized in the filament's interior. The ATP-DnaA-oriC complex binds and stabilizes one strand of the AT-rich DNA unwinding element (DUE), permitting loading of DNA polymerase. After initiation quickly degrades to an ADP-DnaA complex that is not apt for DNA replication. Binds acidic phospholipids. This is Chromosomal replication initiator protein DnaA from Staphylococcus aureus (strain MRSA252).